We begin with the raw amino-acid sequence, 593 residues long: Probable translation initiation factor IF-2 (593 aa).

The tr-type G domain occupies 7–221 (IRTPIVCVMG…VLIGLAQRYM (215 aa)). The interval 16-23 (GHVDHGKT) is G1. 16 to 23 (GHVDHGKT) contributes to the GTP binding site. The G2 stretch occupies residues 41–45 (EITQH). The segment at 77–80 (DTPG) is G3. GTP is bound by residues 77 to 81 (DTPGH) and 131 to 134 (NKVD). The interval 131–134 (NKVD) is G4. The interval 199 to 201 (SAL) is G5.

It belongs to the TRAFAC class translation factor GTPase superfamily. Classic translation factor GTPase family. IF-2 subfamily.

In terms of biological role, function in general translation initiation by promoting the binding of the formylmethionine-tRNA to ribosomes. Seems to function along with eIF-2. The sequence is that of Probable translation initiation factor IF-2 from Methanoculleus marisnigri (strain ATCC 35101 / DSM 1498 / JR1).